A 153-amino-acid chain; its full sequence is Protein SprT-like (153 aa).

Residues 6–148 (LQQLTEQLSL…CGKCGGKIKE (143 aa)) enclose the SprT-like domain. Histidine 67 serves as a coordination point for Zn(2+). Residue glutamate 68 is part of the active site. Histidine 71 lines the Zn(2+) pocket.

The protein belongs to the SprT family. It depends on Zn(2+) as a cofactor.

It is found in the cytoplasm. The sequence is that of Protein SprT-like from Bacillus licheniformis (strain ATCC 14580 / DSM 13 / JCM 2505 / CCUG 7422 / NBRC 12200 / NCIMB 9375 / NCTC 10341 / NRRL NRS-1264 / Gibson 46).